Here is a 458-residue protein sequence, read N- to C-terminus: Argininosuccinate lyase (458 aa).

The protein belongs to the lyase 1 family. Argininosuccinate lyase subfamily.

The protein localises to the cytoplasm. It catalyses the reaction 2-(N(omega)-L-arginino)succinate = fumarate + L-arginine. It functions in the pathway amino-acid biosynthesis; L-arginine biosynthesis; L-arginine from L-ornithine and carbamoyl phosphate: step 3/3. The polypeptide is Argininosuccinate lyase (Bacillus velezensis (strain DSM 23117 / BGSC 10A6 / LMG 26770 / FZB42) (Bacillus amyloliquefaciens subsp. plantarum)).